The sequence spans 123 residues: Small ribosomal subunit protein uS12 (123 aa).

D89 bears the 3-methylthioaspartic acid mark. The disordered stretch occupies residues 101–123 (SLDTAGVKDRKQSRSKYGAKRPK). The span at 113–123 (SRSKYGAKRPK) shows a compositional bias: basic residues.

It belongs to the universal ribosomal protein uS12 family. As to quaternary structure, part of the 30S ribosomal subunit. Contacts proteins S8 and S17. May interact with IF1 in the 30S initiation complex.

Functionally, with S4 and S5 plays an important role in translational accuracy. In terms of biological role, interacts with and stabilizes bases of the 16S rRNA that are involved in tRNA selection in the A site and with the mRNA backbone. Located at the interface of the 30S and 50S subunits, it traverses the body of the 30S subunit contacting proteins on the other side and probably holding the rRNA structure together. The combined cluster of proteins S8, S12 and S17 appears to hold together the shoulder and platform of the 30S subunit. This chain is Small ribosomal subunit protein uS12, found in Laribacter hongkongensis (strain HLHK9).